The primary structure comprises 67 residues: Large ribosomal subunit protein bL35 (67 aa).

This sequence belongs to the bacterial ribosomal protein bL35 family.

This chain is Large ribosomal subunit protein bL35, found in Leptospira interrogans serogroup Icterohaemorrhagiae serovar Lai (strain 56601).